A 1649-amino-acid polypeptide reads, in one-letter code: Cortactin-binding protein 2 (1649 aa).

Residues 1-23 are disordered; it reads MATDGASCEPDLSRAPEDAAGAA. Residues 119 to 276 adopt a coiled-coil conformation; sequence RKMQERMSAQ…EQLKRGSDSK (158 aa). Disordered stretches follow at residues 366–440 and 454–478; these read IGVS…LHPG and GNAN…SPTS. 2 stretches are compositionally biased toward low complexity: residues 368–379 and 386–396; these read VSVPAFPPSSAS and PSTGSTPDPTS. Over residues 411 to 422 the composition is skewed to polar residues; it reads QTPGITPQNSQA. An Asymmetric dimethylarginine modification is found at arginine 498. The disordered stretch occupies residues 499–616; sequence FTGPQAGAPP…SSPQLPPKPS (118 aa). Residues 583 to 593 show a composition bias toward polar residues; that stretch reads TVASPPSSLPQ. 5 ANK repeats span residues 709-739, 743-772, 776-805, 809-838, and 842-871; these read GRPT…DINY, DGHS…QVNA, NGFT…NINH, GGQT…DRSV, and DGWT…PAHG. The interval 872 to 897 is disordered; that stretch reads NSFSEEESESGVFDLDGGEESPEGKS. One copy of the ANK 6 repeat lies at 912–942; that stretch reads EGWTAAHIAASKGFKNCLEILCRHGGLETER. The segment at 1444–1482 is disordered; that stretch reads SCSKKKGESGAWRRVNTSPRRKSSRFSLPTWNKPDLSNE. Serine 1524 is subject to Phosphoserine. Residues 1616-1649 are disordered; the sequence is PRSKVTQCSQNTKRSSSSSNTRQIEINNNSKEEN. Residues 1624-1638 are compositionally biased toward low complexity; that stretch reads SQNTKRSSSSSNTRQ. Residues 1639 to 1649 are compositionally biased toward polar residues; the sequence is IEINNNSKEEN.

In terms of assembly, interacts with CTTN/cortactin SH3 domain. Interacts with STRN, STRN4/zinedin and MOB4/phocein; this interactions mediate the association with the STRIPAK core complex and may regulate dendritic spine distribution of the STRIPAK complex in hippocampal neurons. Activation of glutamate receptors weakens the interaction with STRN and STRN4.

The protein resides in the cytoplasm. It is found in the cell cortex. It localises to the cell projection. Its subcellular location is the dendritic spine. In terms of biological role, regulates the dendritic spine distribution of CTTN/cortactin in hippocampal neurons, and thus controls dendritic spinogenesis and dendritic spine maintenance. Associates with the striatin-interacting phosphatase and kinase (STRIPAK) core complex to regulate dendritic spine distribution of the STRIPAK complex in hippocampal neurons. The sequence is that of Cortactin-binding protein 2 (CTTNBP2) from Aotus nancymaae (Ma's night monkey).